A 185-amino-acid polypeptide reads, in one-letter code: Pyruvate/ketoisovalerate oxidoreductases common subunit gamma (185 aa).

Heterotetramer of one alpha, one beta, one delta and one gamma chain.

The enzyme catalyses 2 oxidized [2Fe-2S]-[ferredoxin] + pyruvate + CoA = 2 reduced [2Fe-2S]-[ferredoxin] + acetyl-CoA + CO2 + H(+). The catalysed reaction is 3-methyl-2-oxobutanoate + 2 oxidized [2Fe-2S]-[ferredoxin] + CoA = 2-methylpropanoyl-CoA + 2 reduced [2Fe-2S]-[ferredoxin] + CO2 + H(+). The sequence is that of Pyruvate/ketoisovalerate oxidoreductases common subunit gamma (porG) from Thermococcus litoralis (strain ATCC 51850 / DSM 5473 / JCM 8560 / NS-C).